Consider the following 205-residue polypeptide: Probable DNA-binding protein (205 aa).

Residues 140 to 168 (GEGDGAPRPACPDFSTRGAETGNQGVQPG) form a disordered region.

This chain is Probable DNA-binding protein, found in Homo sapiens (Human).